Reading from the N-terminus, the 243-residue chain is Orotidine 5'-phosphate decarboxylase (243 aa).

Residues Asp19, Lys41, Asp69–Thr78, Thr124, Arg185, Gln194, Gly214, and Arg215 each bind substrate. Lys71 functions as the Proton donor in the catalytic mechanism.

The protein belongs to the OMP decarboxylase family. Type 1 subfamily. In terms of assembly, homodimer.

The catalysed reaction is orotidine 5'-phosphate + H(+) = UMP + CO2. It participates in pyrimidine metabolism; UMP biosynthesis via de novo pathway; UMP from orotate: step 2/2. Catalyzes the decarboxylation of orotidine 5'-monophosphate (OMP) to uridine 5'-monophosphate (UMP). The protein is Orotidine 5'-phosphate decarboxylase of Xanthomonas campestris pv. campestris (strain 8004).